The primary structure comprises 201 residues: Two-component response regulator ORR10 (201 aa).

A Response regulatory domain is found at histidine 10–leucine 142. 4-aspartylphosphate is present on aspartate 75. The segment at histidine 149–serine 201 is disordered. The span at serine 158 to asparagine 180 shows a compositional bias: low complexity.

This sequence belongs to the ARR family. Type-A subfamily. Two-component system major event consists of a His-to-Asp phosphorelay between a sensor histidine kinase (HK) and a response regulator (RR). In plants, the His-to-Asp phosphorelay involves an additional intermediate named Histidine-containing phosphotransfer protein (HPt). This multistep phosphorelay consists of a His-Asp-His-Asp sequential transfer of a phosphate group between first a His and an Asp of the HK protein, followed by the transfer to a conserved His of the HPt protein and finally the transfer to an Asp in the receiver domain of the RR protein. As to expression, expressed in mature leaves, and at low levels in roots, shoots and flowers.

Its function is as follows. Functions as a response regulator involved in His-to-Asp phosphorelay signal transduction system. Phosphorylation of the Asp residue in the receiver domain activates the ability of the protein to promote the transcription of target genes. Type-A response regulators seem to act as negative regulators of the cytokinin signaling. This is Two-component response regulator ORR10 from Oryza sativa subsp. indica (Rice).